The following is a 176-amino-acid chain: Probable chemoreceptor glutamine deamidase CheD (176 aa).

The protein belongs to the CheD family.

The enzyme catalyses L-glutaminyl-[protein] + H2O = L-glutamyl-[protein] + NH4(+). Probably deamidates glutamine residues to glutamate on methyl-accepting chemotaxis receptors (MCPs), playing an important role in chemotaxis. The polypeptide is Probable chemoreceptor glutamine deamidase CheD (Rhodospirillum rubrum (strain ATCC 11170 / ATH 1.1.1 / DSM 467 / LMG 4362 / NCIMB 8255 / S1)).